Here is a 191-residue protein sequence, read N- to C-terminus: Adenylate kinase (191 aa).

ATP is bound at residue 11–16 (GSGKGT). Positions 31-60 (STGEILRREIKDKTELGKIAEEYINQGQLL) are NMP. AMP-binding positions include threonine 32, arginine 37, 58-60 (QLL), 86-89 (GFPR), and glutamine 93. The LID stretch occupies residues 127-137 (KRGKLFSRKDD). Position 128 (arginine 128) interacts with ATP. AMP is bound by residues arginine 134 and arginine 145. Asparagine 173 serves as a coordination point for ATP.

It belongs to the adenylate kinase family. As to quaternary structure, monomer.

Its subcellular location is the cytoplasm. The catalysed reaction is AMP + ATP = 2 ADP. It functions in the pathway purine metabolism; AMP biosynthesis via salvage pathway; AMP from ADP: step 1/1. Functionally, catalyzes the reversible transfer of the terminal phosphate group between ATP and AMP. Plays an important role in cellular energy homeostasis and in adenine nucleotide metabolism. This chain is Adenylate kinase, found in Azobacteroides pseudotrichonymphae genomovar. CFP2.